The primary structure comprises 207 residues: Small ribosomal subunit protein uS4 (207 aa).

The segment at 31-55 (KCKLDSKPGQHGRTSGARTSDYGTQ) is disordered. Residues 42–53 (GRTSGARTSDYG) show a composition bias toward polar residues. The region spanning 97-160 (SRLDNVVYRM…KKQARIIEAL (64 aa)) is the S4 RNA-binding domain.

This sequence belongs to the universal ribosomal protein uS4 family. In terms of assembly, part of the 30S ribosomal subunit. Contacts protein S5. The interaction surface between S4 and S5 is involved in control of translational fidelity.

One of the primary rRNA binding proteins, it binds directly to 16S rRNA where it nucleates assembly of the body of the 30S subunit. Its function is as follows. With S5 and S12 plays an important role in translational accuracy. This chain is Small ribosomal subunit protein uS4, found in Burkholderia vietnamiensis (strain G4 / LMG 22486) (Burkholderia cepacia (strain R1808)).